Here is an 804-residue protein sequence, read N- to C-terminus: Phosphatidylinositol 4-kinase beta (804 aa).

A PIK helical domain is found at 55–245 (LEKVKMIHGS…GTKLRKLILS (191 aa)). Disordered stretches follow at residues 69-122 (LDKV…ARRR) and 251-309 (AHKK…EPVR). 2 stretches are compositionally biased toward polar residues: residues 91 to 103 (KLTN…TSSR) and 281 to 300 (DATV…SNPK). The region spanning 523–789 (EPWEEKVRRI…MVDGSMRSIT (267 aa)) is the PI3K/PI4K catalytic domain. The G-loop stretch occupies residues 529–535 (VRRIREG). The interval 656–664 (QVKDRHNGN) is catalytic loop. The activation loop stretch occupies residues 675–699 (HIDFGFILSSSPRNLGFETSAFKLT).

This sequence belongs to the PI3/PI4-kinase family. Type III PI4K subfamily. It depends on Mg(2+) as a cofactor. The cofactor is Mn(2+).

The protein resides in the endomembrane system. It is found in the mitochondrion outer membrane. It localises to the rough endoplasmic reticulum membrane. It carries out the reaction a 1,2-diacyl-sn-glycero-3-phospho-(1D-myo-inositol) + ATP = a 1,2-diacyl-sn-glycero-3-phospho-(1D-myo-inositol 4-phosphate) + ADP + H(+). Its function is as follows. Phosphorylates phosphatidylinositol (PI) in the first committed step in the production of the second messenger inositol-1,4,5,-trisphosphate (PIP). May play an important role in the inner ear development. This chain is Phosphatidylinositol 4-kinase beta (pi4kb), found in Xenopus laevis (African clawed frog).